Reading from the N-terminus, the 1123-residue chain is Ubiquitin carboxyl-terminal hydrolase 43 (1123 aa).

A disordered region spans residues 1–102 (MDLGPGDAAG…DGARPPGAQG (102 aa)). A compositionally biased stretch (basic residues) spans 17–28 (RPRRRRSLRRLF). Low complexity predominate over residues 29 to 39 (SRFLLALGSRS). One can recognise a USP domain in the interval 101–710 (QGLKNHGNTC…GAYILFYQKR (610 aa)). Cys-110 serves as the catalytic Nucleophile. Positions 202 to 221 (EGSSRGPVSEKLPPEATKTS) are disordered. His-668 serves as the catalytic Proton acceptor. Position 746 is an asymmetric dimethylarginine (Arg-746). 4 disordered regions span residues 795–826 (ISMK…EKPP), 854–886 (TGTA…IERG), 959–1049 (FQMG…RIPE), and 1068–1099 (SSLR…QASY). Ser-969 bears the Phosphoserine mark. The segment covering 979 to 990 (KDSRRGTSELDR) has biased composition (basic and acidic residues). A compositionally biased stretch (low complexity) spans 1016–1027 (VSPQVPPVSLVS). Ser-1041 is subject to Phosphoserine.

Belongs to the peptidase C19 family. Expressed in brain, aorta and lung at low levels.

The catalysed reaction is Thiol-dependent hydrolysis of ester, thioester, amide, peptide and isopeptide bonds formed by the C-terminal Gly of ubiquitin (a 76-residue protein attached to proteins as an intracellular targeting signal).. In terms of biological role, may recognize and hydrolyze the peptide bond at the C-terminal Gly of ubiquitin. Involved in the processing of poly-ubiquitin precursors as well as that of ubiquitinated proteins. This chain is Ubiquitin carboxyl-terminal hydrolase 43 (USP43), found in Homo sapiens (Human).